Consider the following 433-residue polypeptide: 23S rRNA (uracil(1939)-C(5))-methyltransferase RlmD (433 aa).

Positions 10–68 (RTTTRQIITVSVNDLDSFGQGVARHNGKTLFIPGLLPQENAEVTVTEDKKQYARAKVVR) constitute a TRAM domain. [4Fe-4S] cluster-binding residues include cysteine 81, cysteine 87, cysteine 90, and cysteine 162. The S-adenosyl-L-methionine site is built by glutamine 265, phenylalanine 294, asparagine 299, glutamate 315, asparagine 342, and aspartate 363. Catalysis depends on cysteine 389, which acts as the Nucleophile.

The protein belongs to the class I-like SAM-binding methyltransferase superfamily. RNA M5U methyltransferase family. RlmD subfamily.

The enzyme catalyses uridine(1939) in 23S rRNA + S-adenosyl-L-methionine = 5-methyluridine(1939) in 23S rRNA + S-adenosyl-L-homocysteine + H(+). Catalyzes the formation of 5-methyl-uridine at position 1939 (m5U1939) in 23S rRNA. The protein is 23S rRNA (uracil(1939)-C(5))-methyltransferase RlmD of Escherichia coli O6:K15:H31 (strain 536 / UPEC).